Reading from the N-terminus, the 756-residue chain is Protein O-mannosyl-transferase 2 (756 aa).

The next 7 membrane-spanning stretches (helical) occupy residues 64-84 (AHVP…TRFY), 110-130 (TFFF…AGYL), 156-176 (AFCA…VLEL), 179-199 (SSTA…CITL), 203-223 (ILLD…MVKF), 245-265 (CLSG…LVGI), and 293-313 (VFGL…IHFI). MIR domains are found at residues 344–400 (PEYL…VKRL), 410–466 (PELV…VEVC), and 471–528 (GDPV…IEDH). 4 consecutive transmembrane segments (helical) span residues 602–622 (PVIW…LTVA), 643–663 (LMEG…PFYI), 672–692 (HYFP…DILL), and 713–733 (SVLL…SYGM).

Belongs to the glycosyltransferase 39 family. Widely expressed. Has particularly strong expression in ovary, testis, liver, brain, muscle, heart and eye.

The protein localises to the endoplasmic reticulum membrane. The catalysed reaction is a di-trans,poly-cis-dolichyl beta-D-mannosyl phosphate + L-seryl-[protein] = 3-O-(alpha-D-mannosyl)-L-seryl-[protein] + a di-trans,poly-cis-dolichyl phosphate + H(+). It catalyses the reaction a di-trans,poly-cis-dolichyl beta-D-mannosyl phosphate + L-threonyl-[protein] = 3-O-(alpha-D-mannosyl)-L-threonyl-[protein] + a di-trans,poly-cis-dolichyl phosphate + H(+). It functions in the pathway protein modification; protein glycosylation. Functionally, transfers mannosyl residues to the hydroxyl group of serine or threonine residues. Coexpression of both POMT1 and POMT2 is necessary for enzyme activity, expression of either POMT1 or POMT2 alone is insufficient. This chain is Protein O-mannosyl-transferase 2, found in Danio rerio (Zebrafish).